Consider the following 500-residue polypeptide: Coiled-coil domain-containing protein 125 (500 aa).

Residues 1–105 (MSKVPRSSSE…TDSNSELSDE (105 aa)) are disordered. Residues 10–23 (EAEDIWETEDDMTE) show a composition bias toward acidic residues. Residues 92-101 (RLSSTDSNSE) show a composition bias toward polar residues. Coiled coils occupy residues 101–237 (ELSD…LEAL) and 286–314 (STRK…TADA). Serine 492 carries the post-translational modification Phosphoserine.

As to expression, expressed in many tissues, with highest levels in spleen, thymus and bone marrow.

The protein resides in the cytoplasm. Its function is as follows. May be involved in the regulation of cell migration. The chain is Coiled-coil domain-containing protein 125 (Ccdc125) from Mus musculus (Mouse).